We begin with the raw amino-acid sequence, 513 residues long: ATP synthase subunit alpha (513 aa).

169 to 176 (GDRQTGKT) serves as a coordination point for ATP.

Belongs to the ATPase alpha/beta chains family. F-type ATPases have 2 components, CF(1) - the catalytic core - and CF(0) - the membrane proton channel. CF(1) has five subunits: alpha(3), beta(3), gamma(1), delta(1), epsilon(1). CF(0) has three main subunits: a(1), b(2) and c(9-12). The alpha and beta chains form an alternating ring which encloses part of the gamma chain. CF(1) is attached to CF(0) by a central stalk formed by the gamma and epsilon chains, while a peripheral stalk is formed by the delta and b chains.

The protein resides in the cell inner membrane. The catalysed reaction is ATP + H2O + 4 H(+)(in) = ADP + phosphate + 5 H(+)(out). Produces ATP from ADP in the presence of a proton gradient across the membrane. The alpha chain is a regulatory subunit. In Pectobacterium carotovorum subsp. carotovorum (strain PC1), this protein is ATP synthase subunit alpha.